Reading from the N-terminus, the 461-residue chain is MILCSYWHVGLVLLLFSCCGLVLGSEHETRLVANLLENYNKVIRPVEHHTHFVDITVGLQLIQLISVDEVNQIVETNVRLRQQWIDVRLRWNPADYGGIKKIRLPSDDVWLPDLVLYNNADGDFAIVHMTKLLLDYTGKIMWTPPAIFKSYCEIIVTHFPFDQQNCTMKLGIWTYDGTKVSISPESDRPDLSTFMESGEWVMKDYRGWKHWVYYTCCPDTPYLDITYHFIMQRIPLYFVVNVIIPCLLFSFLTGLVFYLPTDSGEKMTLSISVLLSLTVFLLVIVELIPSTSSAVPLIGKYMLFTMIFVISSIIITVVVINTHHRSPSTHTMPQWVRKIFIDTIPNVMFFSTMKRASKEKQENKIFADDIDISDISGKQVTGEVIFQTPLIKNPDVKSAIEGVKYIAEHMKSDEESSNAAEEWKYVAMVIDHILLCVFMLICIIGTVSVFAGRLIELSQEG.

A signal peptide spans 1–24; it reads MILCSYWHVGLVLLLFSCCGLVLG. Over 25–234 the chain is Extracellular; sequence SEHETRLVAN…ITYHFIMQRI (210 aa). Cystine bridges form between cysteine 152-cysteine 166 and cysteine 216-cysteine 217. Asparagine 165 carries an N-linked (GlcNAc...) asparagine glycan. A run of 3 helical transmembrane segments spans residues 235–259, 267–285, and 301–320; these read PLYF…VFYL, MTLS…LVIV, and YMLF…VVVI. Topologically, residues 321–432 are cytoplasmic; sequence NTHHRSPSTH…WKYVAMVIDH (112 aa). A helical transmembrane segment spans residues 433–451; it reads ILLCVFMLICIIGTVSVFA.

Belongs to the ligand-gated ion channel (TC 1.A.9) family. Acetylcholine receptor (TC 1.A.9.1) subfamily. Alpha-1/CHRNA1 sub-subfamily. In terms of assembly, pentamer of two alpha chains, and one each of the beta, delta, and gamma chains.

Its subcellular location is the postsynaptic cell membrane. It is found in the cell membrane. It catalyses the reaction K(+)(in) = K(+)(out). The catalysed reaction is Na(+)(in) = Na(+)(out). Upon acetylcholine binding, the AChR responds by an extensive change in conformation that affects all subunits and leads to opening of an ion-conducting channel across the plasma membrane. In Tetronarce californica (Pacific electric ray), this protein is Acetylcholine receptor subunit alpha (CHRNA1).